The chain runs to 162 residues: Caveolin-2 (162 aa).

Residues 1–86 lie on the Cytoplasmic side of the membrane; that stretch reads MGLETEKADV…FEISKYVIYK (86 aa). Tyr19 is modified (phosphotyrosine; by SRC). Phosphoserine is present on residues Ser20 and Ser23. Position 27 is a phosphotyrosine; by SRC (Tyr27). Ser36 carries the post-translational modification Phosphoserine. Positions 87–107 form an intramembrane region, helical; sequence FLTVFLAIPLAFIAGILFATL. The Cytoplasmic portion of the chain corresponds to 108-162; sequence SCLHIWILMPFVKTCLMVLPSVQTIWKSVTDVVIGPLCTSVGRIFSSVSMQLSHD.

The protein belongs to the caveolin family. As to quaternary structure, monomer or homodimer. Interacts with CAV1; the interaction forms a stable heterooligomeric complex that is required for targeting to lipid rafts and for caveolae formation. Tyrosine phosphorylated forms do not form heterooligomers with the Tyr-19-phosphorylated form existing as a monomer or dimer and the Tyr-27-form as a monomer only. Interacts (tyrosine phosphorylated form) with the SH2 domain-containing proteins, RASA1, NCK1 and SRC. Interacts (tyrosine phosphorylated form) with INSR; the interaction (Tyr-27-phosphorylated form) is increased on insulin stimulation. Interacts (Tyr-19-phosphorylated form) with MAPK1 (phosphorylated form); the interaction, promoted by insulin, leads to nuclear location and MAPK1 activation. Interacts with STAT3; the interaction is increased on insulin-induced tyrosine phosphorylation leading to STAT activation. Phosphorylated on serine and tyrosine residues. CAV1 promotes phosphorylation on Ser-23 which targets the complex to the plasma membrane, lipid rafts and caveolae. Phosphorylation on Ser-36 appears to modulate mitosis in endothelial cells. Phosphorylation on both Tyr-19 and Tyr-27 is required for insulin-induced 'Ser-727' phosphorylation of STAT3 and its activation. Phosphorylation on Tyr-19 is required for insulin-induced phosphorylation of MAPK1 and DNA binding of STAT3. Tyrosine phosphorylation is induced by both EGF and insulin. In terms of tissue distribution, in the retina, mainly expressed in vessels, but also diffuse expression in the inner and outer plexiform layers and in the inner nuclear layer.

It localises to the nucleus. The protein resides in the cytoplasm. It is found in the golgi apparatus membrane. Its subcellular location is the cell membrane. The protein localises to the membrane. It localises to the caveola. Functionally, may act as a scaffolding protein within caveolar membranes. Interacts directly with G-protein alpha subunits and can functionally regulate their activity. Acts as an accessory protein in conjunction with CAV1 in targeting to lipid rafts and driving caveolae formation. The Ser-36 phosphorylated form has a role in modulating mitosis in endothelial cells. Positive regulator of cellular mitogenesis of the MAPK signaling pathway. Required for the insulin-stimulated nuclear translocation and activation of MAPK1 and STAT3, and the subsequent regulation of cell cycle progression. This is Caveolin-2 (Cav2) from Rattus norvegicus (Rat).